The sequence spans 208 residues: Large ribosomal subunit protein uL4 (208 aa).

A disordered region spans residues 45 to 89; the sequence is RQGTHAHKNRSAVSGGGKKPWRQKGTGRARQGSTRSPQWRGGGTV.

Belongs to the universal ribosomal protein uL4 family. Part of the 50S ribosomal subunit.

Functionally, one of the primary rRNA binding proteins, this protein initially binds near the 5'-end of the 23S rRNA. It is important during the early stages of 50S assembly. It makes multiple contacts with different domains of the 23S rRNA in the assembled 50S subunit and ribosome. Its function is as follows. Forms part of the polypeptide exit tunnel. The sequence is that of Large ribosomal subunit protein uL4 from Lactococcus lactis subsp. lactis (strain IL1403) (Streptococcus lactis).